The primary structure comprises 373 residues: Putative glutamate--cysteine ligase 2-2 (373 aa).

The protein belongs to the glutamate--cysteine ligase type 2 family. YbdK subfamily.

The catalysed reaction is L-cysteine + L-glutamate + ATP = gamma-L-glutamyl-L-cysteine + ADP + phosphate + H(+). ATP-dependent carboxylate-amine ligase which exhibits weak glutamate--cysteine ligase activity. The chain is Putative glutamate--cysteine ligase 2-2 from Legionella pneumophila (strain Corby).